An 898-amino-acid polypeptide reads, in one-letter code: Endoplasmic reticulum metallopeptidase 1 (898 aa).

Met-1 is modified (N-acetylmethionine). Residues Met-1 to Ser-55 are disordered. The Cytoplasmic portion of the chain corresponds to Met-1–Arg-66. Residues Arg-29 to Gly-41 are compositionally biased toward basic and acidic residues. The helical transmembrane segment at Thr-67–Gln-87 threads the bilayer. At Arg-88 to Met-393 the chain is on the lumenal side. The N-linked (GlcNAc...) asparagine glycan is linked to Asn-176. A disulfide bond links Cys-198 and Cys-216. Positions 199 and 211 each coordinate Zn(2+). Glu-245 functions as the Proton acceptor in the catalytic mechanism. 3 residues coordinate Zn(2+): Glu-246, Glu-272, and His-348. The helical transmembrane segment at Val-394–Ile-414 threads the bilayer. The Cytoplasmic segment spans residues Asn-415–Thr-451. A helical transmembrane segment spans residues Phe-452–Ile-472. At Gly-473–Asn-480 the chain is on the lumenal side. The chain crosses the membrane as a helical span at residues Tyr-481 to His-501. Residues Thr-502–Leu-515 lie on the Cytoplasmic side of the membrane. The helical transmembrane segment at Tyr-516–Tyr-538 threads the bilayer. The Lumenal segment spans residues Gln-539–Cys-542. Residues Ser-543–Tyr-562 form a helical membrane-spanning segment. The Cytoplasmic segment spans residues Lys-563–Arg-573. Residues Phe-574–Trp-594 traverse the membrane as a helical segment. Residues Ala-595 to Val-615 lie on the Lumenal side of the membrane. A helical transmembrane segment spans residues Val-616–Ile-636. The Cytoplasmic portion of the chain corresponds to Tyr-637–Thr-645. A helical membrane pass occupies residues Ile-646–Phe-666. Residues Pro-667–Phe-898 lie on the Lumenal side of the membrane. Asn-724 carries an N-linked (GlcNAc...) asparagine glycan.

It belongs to the peptidase M28 family. Zn(2+) is required as a cofactor.

It is found in the endoplasmic reticulum membrane. Within the ovary, required for the organization of somatic cells and oocytes into discrete follicular structures. In Mus musculus (Mouse), this protein is Endoplasmic reticulum metallopeptidase 1.